Consider the following 875-residue polypeptide: Alanine--tRNA ligase (875 aa).

Residues His-561, His-565, Cys-663, and His-667 each contribute to the Zn(2+) site.

Belongs to the class-II aminoacyl-tRNA synthetase family. Zn(2+) is required as a cofactor.

It localises to the cytoplasm. It catalyses the reaction tRNA(Ala) + L-alanine + ATP = L-alanyl-tRNA(Ala) + AMP + diphosphate. Functionally, catalyzes the attachment of alanine to tRNA(Ala) in a two-step reaction: alanine is first activated by ATP to form Ala-AMP and then transferred to the acceptor end of tRNA(Ala). Also edits incorrectly charged Ser-tRNA(Ala) and Gly-tRNA(Ala) via its editing domain. The polypeptide is Alanine--tRNA ligase (Chlamydia trachomatis serovar A (strain ATCC VR-571B / DSM 19440 / HAR-13)).